The primary structure comprises 245 residues: Fibroblast growth factor 13 (245 aa).

Disordered stretches follow at residues methionine 1–asparagine 37 and threonine 213–threonine 245. The segment at methionine 1 to proline 62 is mediates targeting to the nucleus. A compositionally biased stretch (polar residues) spans phenylalanine 215–threonine 245.

The protein belongs to the heparin-binding growth factors family.

Its subcellular location is the cell projection. The protein localises to the filopodium. The protein resides in the growth cone. It is found in the dendrite. It localises to the cell membrane. Its subcellular location is the sarcolemma. The protein localises to the cytoplasm. Its function is as follows. Microtubule-binding protein which directly binds tubulin and is involved in both polymerization and stabilization of microtubules. Through its action on microtubules, may participate in the refinement of axons by negatively regulating axonal and leading processes branching. Plays a crucial role in neuron polarization and migration. Regulates voltage-gated sodium channel transport and function. Required for proper head development, it is involved in neural differentiation through regulation of the mek5-erk5 pathway. The sequence is that of Fibroblast growth factor 13 (fgf13) from Xenopus laevis (African clawed frog).